The following is a 258-amino-acid chain: MSVEDTQPLITHLIELRKRLLNCIIAVIVIFLCLVYFANDIYHLVSAPLIKQLPQGSTMIATDVASPFFTPIKLTFMVSLILSAPVILYQVWAFIAPALYKHERRLVVPLLVSSSLLFYIGMAFAYFVVFPLAFGFLANTAPEGVQVSTDIASYLSFVMALFMAFGVSFEVPVAIVLLCWMGITSPEDLRKKRPYVLVGAFVVGMLLTPPDVFSQTLLAIPMYCLFEIGVFFSRFYVGKGRNREEENDAEAESEKTEE.

At 2–23 (SVEDTQPLITHLIELRKRLLNC) the chain is on the cytoplasmic side. The chain crosses the membrane as a helical span at residues 24–44 (IIAVIVIFLCLVYFANDIYHL). The Periplasmic portion of the chain corresponds to 45–75 (VSAPLIKQLPQGSTMIATDVASPFFTPIKLT). Residues 76 to 96 (FMVSLILSAPVILYQVWAFIA) traverse the membrane as a helical segment. The Cytoplasmic segment spans residues 97 to 115 (PALYKHERRLVVPLLVSSS). The chain crosses the membrane as a helical span at residues 116–136 (LLFYIGMAFAYFVVFPLAFGF). Residues 137 to 156 (LANTAPEGVQVSTDIASYLS) lie on the Periplasmic side of the membrane. Residues 157–177 (FVMALFMAFGVSFEVPVAIVL) traverse the membrane as a helical segment. Residues 178 to 192 (LCWMGITSPEDLRKK) lie on the Cytoplasmic side of the membrane. Residues 193-210 (RPYVLVGAFVVGMLLTPP) form a helical membrane-spanning segment. Residue Asp211 is a topological domain, periplasmic. A helical transmembrane segment spans residues 212 to 232 (VFSQTLLAIPMYCLFEIGVFF). At 233–258 (SRFYVGKGRNREEENDAEAESEKTEE) the chain is on the cytoplasmic side.

This sequence belongs to the TatC family. In terms of assembly, the Tat system comprises two distinct complexes: a TatABC complex, containing multiple copies of TatA, TatB and TatC subunits, and a separate TatA complex, containing only TatA subunits. Substrates initially bind to the TatABC complex, which probably triggers association of the separate TatA complex to form the active translocon. TatC can form a distinct, stable, multimeric complex independent of TatA and TatB. Each of TatA, TatB and TatC are able to interact in pairs without the third partner. Interacts with the signal sequence of DmsA and DmsD.

The protein resides in the cell inner membrane. Its function is as follows. Part of the twin-arginine translocation (Tat) system that transports large folded proteins containing a characteristic twin-arginine motif in their signal peptide across membranes. Together with TatB, TatC is part of a receptor directly interacting with Tat signal peptides. This chain is Sec-independent protein translocase protein TatC, found in Escherichia coli (strain K12).